We begin with the raw amino-acid sequence, 324 residues long: Ig gamma-1 chain C region secreted form (324 aa).

Residues 1-97 form a CH1 region; it reads AKTTPPSVYP…ASSTKVDKKI (97 aa). A disulfide bridge connects residues Cys27 and Cys82. A hinge region spans residues 98-110; it reads VPRDCGCKPCICT. The segment at 111-217 is CH2; that stretch reads VPEVSSVFIF…PIEKTISKTK (107 aa). Disulfide bonds link Cys138/Cys198 and Cys244/Cys302. Asn174 carries an N-linked (GlcNAc...) asparagine glycan. The interval 218-324 is CH3; it reads GRPKAPQVYT…EKSLSHSPGK (107 aa).

It localises to the secreted. In Mus musculus (Mouse), this protein is Ig gamma-1 chain C region secreted form (Ighg1).